A 1226-amino-acid polypeptide reads, in one-letter code: Integrin alpha pat-2 (1226 aa).

A signal peptide spans 1-25 (MREGSFPRRIGLLLGLLGLLAGVAT). Residues 26-1154 (FNIDTKNVVV…IASEEGRDLP (1129 aa)) lie on the Extracellular side of the membrane. 7 FG-GAP repeats span residues 27–94 (NIDT…TCRE), 108–171 (NGSH…NAEE), 178–233 (EPAR…TDRP), 234–290 (NTEY…MMIN), 291–345 (LTDE…KPQY), 362–421 (GKQI…GVRE), and 425–488 (QKIE…PESA). Residues N108, N228, and N290 are each glycosylated (N-linked (GlcNAc...) asparagine). The N-linked (GlcNAc...) asparagine glycan is linked to N608. The Cell attachment site motif lies at 620-622 (RGD). N-linked (GlcNAc...) asparagine glycosylation is present at N679. Positions 709–733 (SVGGDGSKSAPACSPTSDEPDSDGK) are disordered. Residues N775 and N819 are each glycosylated (N-linked (GlcNAc...) asparagine). Disordered regions lie at residues 898–958 (LRIT…HVYE) and 982–1040 (DYEY…ARFS). The span at 920-931 (REEDDESYEDET) shows a compositional bias: acidic residues. Positions 932 to 951 (TTQSQSTRHQSTQHQTHHQS) are enriched in low complexity. Over residues 985 to 1005 (YIPDDQEYDGDDFEEEDDEDF) the composition is skewed to acidic residues. Residues 1010–1026 (SKRVKRNPTPKKKKKGG) show a composition bias toward basic residues. Residues 1027–1040 (EHRGEPRSDKARFS) show a composition bias toward basic and acidic residues. The helical transmembrane segment at 1155–1177 (WWLYLLAILIGLAILILLILLLW) threads the bilayer. The Cytoplasmic portion of the chain corresponds to 1178–1226 (RCGFFKRNRPPTEHAELRADRQPNAQYADSQSRYTSQDQYNQGRHGQML). Residues 1191 to 1226 (HAELRADRQPNAQYADSQSRYTSQDQYNQGRHGQML) form a disordered region. The span at 1200 to 1226 (PNAQYADSQSRYTSQDQYNQGRHGQML) shows a compositional bias: polar residues.

The protein belongs to the integrin alpha chain family. As to quaternary structure, heterodimer of an alpha and a beta subunit. Interacts with beta subunit pat-3. Interacts with dep-1. Component of an integrin containing attachment complex, composed of at least pat-2, pat-3, pat-4, pat-6, unc-52, unc-97 and unc-112. As to expression, expressed in body-wall muscle cells, distal tip cells, and vulval tissue.

Its subcellular location is the membrane. Its function is as follows. Required for muscle development probably through the regulation of the actin-myosin cytoskeleton. Component of an integrin containing attachment complex, which is required for muscle maintenance. During the formation of neuromuscular junctions at the larval stage, negatively regulates membrane protrusion from body wall muscles, probably through lamins such as epi-1, lam-2 and unc-52. Required for distal tip cell migration and dorsal pathfinding. Required for egg-laying. May play a role in cell motility and cell-cell interactions. Plays a role in vulval development. Probably within the alpha pat-2/beta pat-3 integrin receptor complex, plays a role in the negative regulation of let-23 signaling and vulval induction. This is probably partly by restricting the mobility of the let-23 receptor on the plasma membrane of vulval cells which thereby attenuates let-23 signaling. This chain is Integrin alpha pat-2, found in Caenorhabditis elegans.